The chain runs to 658 residues: MGSCSCTRRHFLLSICFLQVITIIERQVFDFLGYMWAPILVNFFHILFIIFGFYGAYHFRVKYIITYLIWNFLWIGWNTFLICFYLNVGQLNRDSDLLNLGTGSVSWFEANGYGCKPTYNMAADDTFRPQRPERVEGCLLDYPLVEITHSGVQCALALLGILGAILISCIFLDEDDRFDFMNGDAKSPQHTVVHPMYVSYTSIPTTSASATMQSNKHLQLQHQQPQQNSLKLYHHQQQQQPKLHHFNKNYQLSGSNNNTLNNNLHQRAPALLPPNTTNNRSASFQTQSHPSNNHVTQRTGGEGSNCSSLRRHRQHHSKALVSPSPMSPQTTPSLSYASLQNSSPYLAGNSLSNSNYSIFQSPDSLQGSSHFARIHHKPKPPKSDYPVSGEFNPGGNISSPVRPLDRLSRSLEDDEDNFSLQKFAPGEHGVTYVPFQSPTPNSLFLGENNNSQPHLVFHTNSRSSPNNNAYPYDQSGLPSSLRMGSNSNARRPTHIPLPTVPMHNCQEVENDEDADGESEQDHDQMLTPPPPPLVRPHIHQRLGQAPYLDLSPEVAERYAIPSKLGPSLPIQVPLPVPHGSPMVRRSNRRPRPSNPVNFCDQIRATPPGYVVRAQSDDRLMEQVEADAAPHVNRRSGRGGSGQKTRPRSFCNSIVGVQG.

The next 4 membrane-spanning stretches (helical) occupy residues 1-22 (MGSCSCTRRHFLLSICFLQVIT), 31-51 (FLGYMWAPILVNFFHILFIIF), 64-84 (IITYLIWNFLWIGWNTFLICF), and 152-172 (VQCALALLGILGAILISCIFL). 2 disordered regions span residues 222–241 (HQQPQQNSLKLYHHQQQQQP) and 248–337 (KNYQ…LSYA). Residues Asn-257, Asn-275, and Asn-279 are each glycosylated (N-linked (GlcNAc...) asparagine). Residues 274–308 (PNTTNNRSASFQTQSHPSNNHVTQRTGGEGSNCSS) are compositionally biased toward polar residues. A Phosphoserine modification is found at Ser-291. An N-linked (GlcNAc...) asparagine glycan is attached at Asn-305. At Ser-308 the chain carries Phosphoserine. Residues 309–318 (LRRHRQHHSK) show a composition bias toward basic residues. Low complexity predominate over residues 322–335 (SPSPMSPQTTPSLS). Residues Asn-355 and Asn-396 are each glycosylated (N-linked (GlcNAc...) asparagine). Ser-398 and Ser-399 each carry phosphoserine. Asn-417 and Asn-449 each carry an N-linked (GlcNAc...) asparagine glycan. 2 disordered regions span residues 571–601 (QVPLPVPHGSPMVRRSNRRPRPSNPVNFCDQ) and 621–658 (EQVEADAAPHVNRRSGRGGSGQKTRPRSFCNSIVGVQG).

The protein belongs to the NKAIN family. Interacts with nrv1. As to expression, expressed in the brain.

Its subcellular location is the cell membrane. Its function is as follows. Induces a small but significant sodium conductance when expressed in Xenopus oocytes. The sequence is that of Sodium/potassium-transporting ATPase subunit beta-1-interacting protein (NKAIN) from Drosophila melanogaster (Fruit fly).